Reading from the N-terminus, the 131-residue chain is Small ribosomal subunit protein uS8 (131 aa).

It belongs to the universal ribosomal protein uS8 family. In terms of assembly, part of the 30S ribosomal subunit. Contacts proteins S5 and S12.

Functionally, one of the primary rRNA binding proteins, it binds directly to 16S rRNA central domain where it helps coordinate assembly of the platform of the 30S subunit. The chain is Small ribosomal subunit protein uS8 from Blochmanniella pennsylvanica (strain BPEN).